A 242-amino-acid chain; its full sequence is MNPEEFRAALAAQGIDLTATQEQQFADYYQFLVATNEHVNLTTITAEPDVYLKHFYDSLTPAFYVSALRTEPLTLCDVGAGAGFPSLPLKIVFPQLQVTIVDSLNKRITFLNELAAKLNLTGVAFHHARAEEFGGKRAANREGFDLVTARAVARMSVLSELCLPLVKVGGQFVALKAAQTENELAVSQKAITTLGGKLQADEAFNLPVSNDPRHIVVIDKVKTTPKRYPRKAGTPNKEPLED.

Residues Gly79, Phe84, 130 to 131 (AE), and Arg150 contribute to the S-adenosyl-L-methionine site.

Belongs to the methyltransferase superfamily. RNA methyltransferase RsmG family.

It localises to the cytoplasm. In terms of biological role, specifically methylates the N7 position of a guanine in 16S rRNA. This Levilactobacillus brevis (strain ATCC 367 / BCRC 12310 / CIP 105137 / JCM 1170 / LMG 11437 / NCIMB 947 / NCTC 947) (Lactobacillus brevis) protein is Ribosomal RNA small subunit methyltransferase G.